Consider the following 392-residue polypeptide: Formate-dependent phosphoribosylglycinamide formyltransferase (392 aa).

N(1)-(5-phospho-beta-D-ribosyl)glycinamide-binding positions include 22 to 23 (EL) and Glu82. ATP is bound by residues Arg114, Lys155, 160–165 (SSGKGQ), 195–198 (EGVV), and Glu203. The region spanning 119 to 308 (RLAAEELQLP…EFALHVRAFL (190 aa)) is the ATP-grasp domain. Glu267 and Glu279 together coordinate Mg(2+). N(1)-(5-phospho-beta-D-ribosyl)glycinamide is bound by residues Asp286, Lys355, and 362 to 363 (RR).

It belongs to the PurK/PurT family. As to quaternary structure, homodimer.

It catalyses the reaction N(1)-(5-phospho-beta-D-ribosyl)glycinamide + formate + ATP = N(2)-formyl-N(1)-(5-phospho-beta-D-ribosyl)glycinamide + ADP + phosphate + H(+). The protein operates within purine metabolism; IMP biosynthesis via de novo pathway; N(2)-formyl-N(1)-(5-phospho-D-ribosyl)glycinamide from N(1)-(5-phospho-D-ribosyl)glycinamide (formate route): step 1/1. Its function is as follows. Involved in the de novo purine biosynthesis. Catalyzes the transfer of formate to 5-phospho-ribosyl-glycinamide (GAR), producing 5-phospho-ribosyl-N-formylglycinamide (FGAR). Formate is provided by PurU via hydrolysis of 10-formyl-tetrahydrofolate. This is Formate-dependent phosphoribosylglycinamide formyltransferase from Shigella dysenteriae serotype 1 (strain Sd197).